A 738-amino-acid polypeptide reads, in one-letter code: AP-4 complex subunit beta-1 (738 aa).

Residues cysteine 534 to leucine 600 form a hinge region. Residues isoleucine 601–serine 738 are ear; mediates interaction with TEPSIN.

This sequence belongs to the adaptor complexes large subunit family. Adaptor protein complex 4 (AP-4) is a heterotetramer composed of two large adaptins (epsilon-type subunit AP4E1 and beta-type subunit AP4B1), a medium adaptin (mu-type subunit AP4M1) and a small adaptin (sigma-type AP4S1). Interacts with TEPSIN; this interaction requires the presence of a functional AP-4 complex. Interacts with GRIA2; probably indirect it mediates the somatodendritic localization of GRIA2 in neurons.

It is found in the golgi apparatus. The protein localises to the trans-Golgi network membrane. Its function is as follows. Component of the adaptor protein complex 4 (AP-4). Adaptor protein complexes are vesicle coat components involved both in vesicle formation and cargo selection. They control the vesicular transport of proteins in different trafficking pathways. AP-4 forms a non clathrin-associated coat on vesicles departing the trans-Golgi network (TGN) and may be involved in the targeting of proteins from the trans-Golgi network (TGN) to the endosomal-lysosomal system. It is also involved in protein sorting to the basolateral membrane in epithelial cells and the proper asymmetric localization of somatodendritic proteins in neurons. AP-4 is involved in the recognition and binding of tyrosine-based sorting signals found in the cytoplasmic part of cargos, but may also recognize other types of sorting signal. The chain is AP-4 complex subunit beta-1 from Mus musculus (Mouse).